A 226-amino-acid polypeptide reads, in one-letter code: Glutathione peroxidase 3 (226 aa).

An N-terminal signal peptide occupies residues 1-24 (MARLLQASCLLSLLLAGFVPQSRG). Sec73 is a catalytic residue. Sec73 is a non-standard amino acid (selenocysteine).

Belongs to the glutathione peroxidase family. In terms of assembly, homotetramer. Secreted in plasma.

It is found in the secreted. The catalysed reaction is 2 glutathione + H2O2 = glutathione disulfide + 2 H2O. The enzyme catalyses tert-butyl hydroperoxide + 2 glutathione = tert-butanol + glutathione disulfide + H2O. Protects cells and enzymes from oxidative damage, by catalyzing the reduction of hydrogen peroxide, lipid peroxides and organic hydroperoxide, by glutathione. The chain is Glutathione peroxidase 3 from Hylobates lar (Lar gibbon).